A 114-amino-acid chain; its full sequence is Nucleoid-associated protein PCC7424_2224 (114 aa).

The protein belongs to the YbaB/EbfC family. Homodimer.

The protein localises to the cytoplasm. It localises to the nucleoid. Its function is as follows. Binds to DNA and alters its conformation. May be involved in regulation of gene expression, nucleoid organization and DNA protection. This chain is Nucleoid-associated protein PCC7424_2224, found in Gloeothece citriformis (strain PCC 7424) (Cyanothece sp. (strain PCC 7424)).